Reading from the N-terminus, the 122-residue chain is Thioredoxin H-type (122 aa).

Residues Ala-2–Ala-118 form the Thioredoxin domain. Cys-40 and Cys-43 are oxidised to a cystine.

It is found in the cytoplasm. Its function is as follows. Participates in various redox reactions through the reversible oxidation of the active center dithiol to a disulfide. The H form is known to activate a number of cytosolic enzymes. This Oryza sativa subsp. indica (Rice) protein is Thioredoxin H-type (TRXH).